A 108-amino-acid polypeptide reads, in one-letter code: Thaicobrin (108 aa).

The region spanning 1–108 is the B30.2/SPRY domain; it reads SPPGNWQKAD…IWQKGLWWLG (108 aa).

This sequence belongs to the ohanin/vespryn family. Expressed by the venom gland.

Its subcellular location is the secreted. In terms of biological role, neurotoxin that produces dose-dependent hypolocomotion and hyperalgesia in mice. May directly act on the central nervous system, as it is 6500-fold more potent when administered intracerebroventricularly than intraperitoneal. This is Thaicobrin from Naja kaouthia (Monocled cobra).